We begin with the raw amino-acid sequence, 532 residues long: Neutral amino acid transporter A (532 aa).

Methionine 1 is subject to N-acetylmethionine. A compositionally biased stretch (polar residues) spans 1-10 (MEKSNETNGY). Residues 1 to 25 (MEKSNETNGYLDSAQAGPAAGPGAP) are disordered. Topologically, residues 1–41 (MEKSNETNGYLDSAQAGPAAGPGAPGTAAGRARRCAGFLRR) are cytoplasmic. Residues 14–25 (AQAGPAAGPGAP) are compositionally biased toward low complexity. A run of 3 helical transmembrane segments spans residues 42 to 62 (QALV…GAAL), 88 to 108 (MIIL…LDAS), and 119 to 139 (AYFG…AFII). Residues 140-216 (KPGSGAQTLQ…VTHEKIPIGT (77 aa)) are Extracellular-facing. N-linked (GlcNAc...) asparagine glycosylation is found at asparagine 201 and asparagine 206. The next 6 membrane-spanning stretches (helical) occupy residues 217 to 237 (EIEG…GVAL), 257 to 277 (ATMV…MFLV), 298 to 318 (IFAS…LIYF), 328 to 348 (FLLG…SSAT), 373 to 393 (IGAT…AVFI), and 418 to 438 (VGAA…LEAI). Residues 500-532 (CKSEEETSPLVTHQNPAGPVASAPELESKESVL) form a disordered region. Phosphoserine is present on residues serine 507, serine 527, and serine 530.

It belongs to the dicarboxylate/amino acid:cation symporter (DAACS) (TC 2.A.23) family. SLC1A4 subfamily. Expressed mostly in brain, muscle, and pancreas but detected in all tissues examined.

It localises to the membrane. Its subcellular location is the melanosome. It catalyses the reaction L-threonine(in) + Na(+)(in) = L-threonine(out) + Na(+)(out). It carries out the reaction L-serine(in) + Na(+)(in) = L-serine(out) + Na(+)(out). The enzyme catalyses L-cysteine(in) + Na(+)(in) = L-cysteine(out) + Na(+)(out). The catalysed reaction is L-alanine(in) + Na(+)(in) = L-alanine(out) + Na(+)(out). It catalyses the reaction L-proline(in) + Na(+)(in) = L-proline(out) + Na(+)(out). It carries out the reaction 4-hydroxy-L-proline(in) + Na(+)(in) = 4-hydroxy-L-proline(out) + Na(+)(out). In terms of biological role, sodium-dependent neutral amino-acid transporter that mediates transport of alanine, serine, cysteine, proline, hydroxyproline and threonine. This chain is Neutral amino acid transporter A, found in Homo sapiens (Human).